We begin with the raw amino-acid sequence, 369 residues long: MSVNVDATSSSGASEVRHDWTLAEVNALFAMPFNDLLFKAQCVHRAHFDPNYVQVSTLLSIKTGACPEDCKYCPQSARYDTGLEKERLMEIEKVIQRAREAKAAGSTRFCMGAAWRNPKERDMPYVTDMVREVKKLGLETCMTLGMLTREQAIALQQAGLDYYNHNLDTSPEFYGDIITTRTYQDRLNTLDAVREAGMNVCSGGIVGMGETGSDRSGLLMQLANLEHQPESVPINMLVKVKGTPMENVEDLDYFEFIRTIAVARIMMPKSFVRLSAGREAMNEQMQAMCFMAGANSIFYGCKLLTTSNPETHEDVMLFKKLGINAKQTREYSDEAHQAALLDEIQTNEAPQAPEMFYDATQKKPETVNI.

A Radical SAM core domain is found at 51–269 (NYVQVSTLLS…IAVARIMMPK (219 aa)). The [4Fe-4S] cluster site is built by C66, C70, and C73. Residues C110, C141, C201, and R273 each coordinate [2Fe-2S] cluster.

It belongs to the radical SAM superfamily. Biotin synthase family. Homodimer. [4Fe-4S] cluster serves as cofactor. Requires [2Fe-2S] cluster as cofactor.

The catalysed reaction is (4R,5S)-dethiobiotin + (sulfur carrier)-SH + 2 reduced [2Fe-2S]-[ferredoxin] + 2 S-adenosyl-L-methionine = (sulfur carrier)-H + biotin + 2 5'-deoxyadenosine + 2 L-methionine + 2 oxidized [2Fe-2S]-[ferredoxin]. Its pathway is cofactor biosynthesis; biotin biosynthesis; biotin from 7,8-diaminononanoate: step 2/2. Its function is as follows. Catalyzes the conversion of dethiobiotin (DTB) to biotin by the insertion of a sulfur atom into dethiobiotin via a radical-based mechanism. This chain is Biotin synthase, found in Pseudoalteromonas atlantica (strain T6c / ATCC BAA-1087).